Consider the following 584-residue polypeptide: Segmentation polarity homeobox protein engrailed (584 aa).

Disordered stretches follow at residues Met1–His27, Glu141–Ser198, Ile343–Thr380, Cys392–Asn451, and Asp465–Ala492. The segment covering Ala12–Pro23 has biased composition (pro residues). Positions Thr160–Asp174 are enriched in acidic residues. The segment covering His189 to Ser198 has biased composition (polar residues). 2 stretches are compositionally biased toward low complexity: residues Ser348–Thr380 and Cys392–Ser405. Residues Gln478 to Pro489 are compositionally biased toward basic and acidic residues. Positions Glu486–Thr545 form a DNA-binding region, homeobox.

This sequence belongs to the engrailed homeobox family.

It localises to the nucleus. In terms of biological role, this protein specifies the body segmentation pattern. It is required for the development of the central nervous system. Transcriptional regulator that repress activated promoters. In Drosophila virilis (Fruit fly), this protein is Segmentation polarity homeobox protein engrailed (en).